Reading from the N-terminus, the 129-residue chain is Phosphoribosyl-AMP cyclohydrolase (129 aa).

Asp-85 is a binding site for Mg(2+). A Zn(2+)-binding site is contributed by Cys-86. Mg(2+)-binding residues include Asp-87 and Asp-89. Residues Cys-102 and Cys-109 each contribute to the Zn(2+) site.

The protein belongs to the PRA-CH family. In terms of assembly, homodimer. Requires Mg(2+) as cofactor. It depends on Zn(2+) as a cofactor.

Its subcellular location is the cytoplasm. The enzyme catalyses 1-(5-phospho-beta-D-ribosyl)-5'-AMP + H2O = 1-(5-phospho-beta-D-ribosyl)-5-[(5-phospho-beta-D-ribosylamino)methylideneamino]imidazole-4-carboxamide. The protein operates within amino-acid biosynthesis; L-histidine biosynthesis; L-histidine from 5-phospho-alpha-D-ribose 1-diphosphate: step 3/9. In terms of biological role, catalyzes the hydrolysis of the adenine ring of phosphoribosyl-AMP. The polypeptide is Phosphoribosyl-AMP cyclohydrolase (Methanococcus maripaludis (strain C5 / ATCC BAA-1333)).